The following is a 317-amino-acid chain: Melanocyte-stimulating hormone receptor (317 aa).

Residues 1-37 lie on the Extracellular side of the membrane; it reads MPMQGAQRRLLGSLNSTPTATPNLGLAANHTGAPCLE. The N-linked (GlcNAc...) asparagine glycan is linked to Asn-29. A helical transmembrane segment spans residues 38–63; it reads VSIPDGLFLSLGLVSLVENVLVVAAI. Residues 64-72 lie on the Cytoplasmic side of the membrane; that stretch reads AKNRNLHSP. The chain crosses the membrane as a helical span at residues 73–93; it reads MYCFICCLALSDLLVSGSNML. Over 94–118 the chain is Extracellular; that stretch reads EMAVILLLEAGALATRASVVQQLQN. Residues 119-140 form a helical membrane-spanning segment; the sequence is TIDVLTCSSMLCSLCFLGAIAV. Residues 141–163 lie on the Cytoplasmic side of the membrane; it reads DRYVSIFYALRYHSIVTLPRARR. Residues 164–183 form a helical membrane-spanning segment; the sequence is AIAAIWVASVLSSTLFIAYC. Topologically, residues 184–191 are extracellular; sequence DHAAVLLC. Residues 192-211 form a helical membrane-spanning segment; that stretch reads LVVFFLAMLVLMAVLYVHML. At 212–240 the chain is on the cytoplasmic side; it reads ARACQHAQGITRLHKRQLPAHQGFGLRGA. The helical transmembrane segment at 241–266 threads the bilayer; that stretch reads ATLTILLGIFFLCWGPFFLHLMLVVL. Topologically, residues 267–279 are extracellular; it reads CPQHLTCSCIFKN. Residues 280 to 300 traverse the membrane as a helical segment; it reads FKVFLTLIICNTIIDPLIYAF. Residues 301 to 317 are Cytoplasmic-facing; that stretch reads RSQELCRTLREVLLCSW. The S-palmitoyl cysteine moiety is linked to residue Cys-315.

The protein belongs to the G-protein coupled receptor 1 family. Interacts with MGRN1, but does not undergo MGRN1-mediated ubiquitination; this interaction competes with GNAS-binding and thus inhibits agonist-induced cAMP production. Interacts with OPN3; the interaction results in a decrease in MC1R-mediated cAMP signaling and ultimately a decrease in melanin production in melanocytes.

It is found in the cell membrane. Functionally, receptor for MSH (alpha, beta and gamma) and ACTH. The activity of this receptor is mediated by G proteins which activate adenylate cyclase. Mediates melanogenesis, the production of eumelanin (black/brown) and phaeomelanin (red/yellow), via regulation of cAMP signaling in melanocytes. The sequence is that of Melanocyte-stimulating hormone receptor (MC1R) from Alouatta pigra (Guatemalan howler monkey).